A 113-amino-acid polypeptide reads, in one-letter code: Large ribosomal subunit protein uL22 (113 aa).

Belongs to the universal ribosomal protein uL22 family. Part of the 50S ribosomal subunit.

Its function is as follows. This protein binds specifically to 23S rRNA; its binding is stimulated by other ribosomal proteins, e.g. L4, L17, and L20. It is important during the early stages of 50S assembly. It makes multiple contacts with different domains of the 23S rRNA in the assembled 50S subunit and ribosome. In terms of biological role, the globular domain of the protein is located near the polypeptide exit tunnel on the outside of the subunit, while an extended beta-hairpin is found that lines the wall of the exit tunnel in the center of the 70S ribosome. This Desulforamulus reducens (strain ATCC BAA-1160 / DSM 100696 / MI-1) (Desulfotomaculum reducens) protein is Large ribosomal subunit protein uL22.